A 698-amino-acid polypeptide reads, in one-letter code: MSDQDKHEQLRIGLVSPEQILAWSERILPNGERVGQVTTERTLDYRTYEPVRDGLFCERIFGPKKRGVCACVKPRMMENDKENYNSNFCTQCGVELAIDPRIRRYRMGYIKLACPVVHIWYFKRRPSYIADLLDKTRKELEDPVYCDVCITRPTAKKPTLLRFQGLRPSKYESWAEKIAYYLSWDFGLVQEREIATGGKAIREQLAGLDLQMIIDRSYIEWKEIDEVISILFSEPENLFSNRKIYAQFKEQKLQKLRRRKDLLVRRMRFAKYFLRTNVEPQWMVLCLLPVLPPDLRPMFQLNEGGVITSDLNELYQTVIRRNNNVLQFIETTSAFLIPDLLPDQKKLVQQAVDALLDNSIGTQPVRDSHDRPYKSFSDFIQGKEGRFRENLLGKRVDYSGRSVIVVGPLLSLYQCGLPREIAIELFQAFLIRDLVERQIAPNLRAAKFLIRDRGPIIWNVLKQIMQKHPILLNRAPTLHRLGIQAFIPVLINERAIRLHPLVCAGFNADFDGDQMAVHVPLSMEAQVEARLLMFSHLNLISPTIGDPICVPTQDMLLGLYRSTLQKNQGIYENRYHPNSSKKKIVSPSFYSYDDALKAYEQKQIDLDSPLWLRWGREIDTSIINSVNRELPIEVQYECLGTFYEIYDHFRIRKGRVGEILNKYIRTTVGRIRFNREIEEAIKGLWTYDIRQEMLLFRI.

Zn(2+)-binding residues include Cys-69, Cys-71, Cys-89, and Cys-92. The Mg(2+) site is built by Asp-509, Asp-511, and Asp-513.

The protein belongs to the RNA polymerase beta' chain family. RpoC1 subfamily. In plastids the minimal PEP RNA polymerase catalytic core is composed of four subunits: alpha, beta, beta', and beta''. When a (nuclear-encoded) sigma factor is associated with the core the holoenzyme is formed, which can initiate transcription. The cofactor is Mg(2+). Zn(2+) serves as cofactor.

It localises to the plastid. The protein resides in the chloroplast. It carries out the reaction RNA(n) + a ribonucleoside 5'-triphosphate = RNA(n+1) + diphosphate. In terms of biological role, DNA-dependent RNA polymerase catalyzes the transcription of DNA into RNA using the four ribonucleoside triphosphates as substrates. This is DNA-directed RNA polymerase subunit beta' from Cryptomeria japonica (Japanese cedar).